The following is a 103-amino-acid chain: Large ribosomal subunit protein uL24 (103 aa).

It belongs to the universal ribosomal protein uL24 family. In terms of assembly, part of the 50S ribosomal subunit.

One of two assembly initiator proteins, it binds directly to the 5'-end of the 23S rRNA, where it nucleates assembly of the 50S subunit. Its function is as follows. One of the proteins that surrounds the polypeptide exit tunnel on the outside of the subunit. This is Large ribosomal subunit protein uL24 from Treponema pallidum (strain Nichols).